A 601-amino-acid polypeptide reads, in one-letter code: MEGADLLTAGVLFLFAAVAAVPLAARLGIGAVLGYLLAGIAIGPWGLGFISDVDEILHFSELGVVFLMFIIGLELNPSRLWQLRRSIFGVGAAQVLLSAAVLAGLLMLADFLWQAAVVGGIGLAMSSTAMALQLMREKGMNRSESGQLGFSVLLFQDLAVIPALALVPLLAGSVDEHFDWFKVAMKVLAFAVMLIGGRYLLRPVFRFIAASGVREVFTAATLLLVLSAALFMDALGLSMALGTFIAGVLLAESEYRHELENAIDPFKGLLLGLFFISVGMSLNLGVLYTHLLWVAASVVILVVIKMLTLYLLARLYGIRSSERMQFASVLSQGGEFAFVLFSTASSQRLFQGDQMALLLVTVTLSMMTTPLLMKGIDKWLSRRLNGPEENDEKPWVEDDKPQVIVVGFGRFGQVIARLLMANKMRITVLERDIGAVNLMRKYGYKVYYGDATQVELLRSAGAEAAESIVITCNEPEDTMKLVALCQQHFPHLHILARARGRVEAHELLQAGVTQFSRETFSSALELGRKTLVSLGMHPHQAQRAQLHFRRLDMRMLRELIPEHSDMVQISRAREARRELEEIFQREMQQERRQLDGWDEFE.

The next 13 membrane-spanning stretches (helical) occupy residues 4–24 (ADLL…VPLA), 29–49 (IGAV…GLGF), 55–75 (EILH…GLEL), 87–107 (IFGV…GLLM), 111–131 (FLWQ…TAMA), 152–172 (VLLF…LLAG), 177–197 (HFDW…LIGG), 207–227 (FIAA…LVLS), 230–250 (LFMD…GVLL), 262–282 (AIDP…GMSL), 284–304 (LGVL…LVVI), 324–344 (MQFA…FSTA), and 356–376 (ALLL…MKGI). Residues 400 to 519 (KPQVIVVGFG…AGVTQFSRET (120 aa)) form the RCK N-terminal domain.

The protein belongs to the monovalent cation:proton antiporter 2 (CPA2) transporter (TC 2.A.37) family. KefB subfamily. As to quaternary structure, interacts with the regulatory subunit KefG.

It localises to the cell inner membrane. Pore-forming subunit of a potassium efflux system that confers protection against electrophiles. Catalyzes K(+)/H(+) antiport. The protein is Glutathione-regulated potassium-efflux system protein KefB of Salmonella heidelberg (strain SL476).